Consider the following 1250-residue polypeptide: Bifunctional autolysin (1250 aa).

An N-terminal signal peptide occupies residues 1-29 (MAKKFNYKLPSMVALTLVGSAVTAHQVQA). Polar residues predominate over residues 103 to 138 (GDTRANQSATTNNTQPVAKSTSTTAPKTNTNVTNAG). 2 disordered regions span residues 103-151 (GDTR…NSEN) and 173-219 (AAAP…KYKP). Low complexity predominate over residues 173 to 196 (AAAPKAATTSAPKAKTEATPKVTT). The interval 199–769 (ASAQPRSVAA…AVAQPKTAVK (571 aa)) is N-acetylmuramoyl-L-alanine amidase. 7 GW domains span residues 437–511 (TVAA…YNTA), 513–587 (SPVN…DTAK), 606–680 (TVSS…YNNA), 682–756 (SPVN…VPAA), 778–853 (TTQT…VQNL), 855–930 (KEVK…APTA), and 937–1011 (AAKD…KELI). An endo-beta-N-acetylglucosaminidase region spans residues 770 to 1250 (AYTVTKPQTT…GKYFDIPQYK (481 aa)).

This sequence in the N-terminal section; belongs to the N-acetylmuramoyl-L-alanine amidase 2 family. It in the C-terminal section; belongs to the glycosyl hydrolase 73 family. In terms of assembly, oligomer; forms a ring structure at the cell surface which is important for efficient partitioning of daughter cells after cell division. Post-translationally, undergoes proteolytic processing to generate the two extracellular lytic enzymes, probably at the septal region on the cell surface.

The protein localises to the secreted. The enzyme catalyses Hydrolyzes the link between N-acetylmuramoyl residues and L-amino acid residues in certain cell-wall glycopeptides.. It carries out the reaction an N(4)-(oligosaccharide-(1-&gt;3)-[oligosaccharide-(1-&gt;6)]-beta-D-Man-(1-&gt;4)-beta-D-GlcNAc-(1-&gt;4)-alpha-D-GlcNAc)-L-asparaginyl-[protein] + H2O = an oligosaccharide-(1-&gt;3)-[oligosaccharide-(1-&gt;6)]-beta-D-Man-(1-&gt;4)-D-GlcNAc + N(4)-(N-acetyl-beta-D-glucosaminyl)-L-asparaginyl-[protein]. Functionally, endohydrolysis of the di-N-acetylchitobiosyl unit in high-mannose glycopeptides and glycoproteins containing the -[(Man)5(GlcNAc)2]-Asn structure. One N-acetyl-D-glucosamine residue remains attached to the protein; the rest of the oligosaccharide is released intact. Cleaves the peptidoglycan connecting the daughter cells at the end of the cell division cycle, resulting in the separation of the two newly divided cells. Acts as an autolysin in penicillin-induced lysis. The sequence is that of Bifunctional autolysin (atl) from Staphylococcus aureus (strain MSSA476).